The following is an 81-amino-acid chain: Large ribosomal subunit protein uL23 (81 aa).

It belongs to the universal ribosomal protein uL23 family. As to quaternary structure, part of the 50S ribosomal subunit. Contacts protein L29.

Its function is as follows. Binds to 23S rRNA. One of the proteins that surrounds the polypeptide exit tunnel on the outside of the ribosome. The sequence is that of Large ribosomal subunit protein uL23 from Pyrobaculum aerophilum (strain ATCC 51768 / DSM 7523 / JCM 9630 / CIP 104966 / NBRC 100827 / IM2).